A 62-amino-acid polypeptide reads, in one-letter code: Small EDRK-rich factor 1 (62 aa).

Composition is skewed to basic and acidic residues over residues 1–30 (MARG…KEDS) and 50–62 (IANE…TTEK). The tract at residues 1–62 (MARGNQREIA…EKKSMQTTEK (62 aa)) is disordered.

The protein belongs to the SERF family. As to quaternary structure, interacts with SNCA; this interaction promotes the aggregation of SNCA. In terms of tissue distribution, expressed in brain (at protein level). Highly expressed in the testis.

It is found in the cytoplasm. The protein resides in the cytosol. It localises to the nucleus. In terms of biological role, positive regulator of amyloid protein aggregation and proteotoxicity. Induces conformational changes in amyloid proteins, such as APP, HTT, and SNCA, driving them into compact formations preceding the formation of aggregates. This chain is Small EDRK-rich factor 1 (Serf1), found in Mus musculus (Mouse).